A 226-amino-acid chain; its full sequence is UPF0319 protein SO_1816 (226 aa).

Residues 1-21 (MKSLLPISSLLVLLGSASVSA) form the signal peptide.

Belongs to the UPF0319 family.

In Shewanella oneidensis (strain ATCC 700550 / JCM 31522 / CIP 106686 / LMG 19005 / NCIMB 14063 / MR-1), this protein is UPF0319 protein SO_1816.